We begin with the raw amino-acid sequence, 855 residues long: DNA mismatch repair protein MutS (855 aa).

ATP is bound at residue 616-623 (GPNMGGKS).

This sequence belongs to the DNA mismatch repair MutS family.

Functionally, this protein is involved in the repair of mismatches in DNA. It is possible that it carries out the mismatch recognition step. This protein has a weak ATPase activity. The chain is DNA mismatch repair protein MutS from Salmonella paratyphi A (strain ATCC 9150 / SARB42).